A 300-amino-acid polypeptide reads, in one-letter code: Protoheme IX farnesyltransferase (300 aa).

Transmembrane regions (helical) follow at residues 24 to 44 (VTQL…PGMV), 48 to 68 (VLLG…AINC), 94 to 114 (LQIL…LYTF), 118 to 138 (LTMW…TLLL), 146 to 166 (IVIG…AVTG), 172 to 192 (AWIL…VLAL), 217 to 237 (LHIL…FISG), 239 to 259 (SGAV…AYAW), and 278 to 298 (IVYL…RPVI).

It belongs to the UbiA prenyltransferase family. Protoheme IX farnesyltransferase subfamily.

The protein localises to the cell inner membrane. The catalysed reaction is heme b + (2E,6E)-farnesyl diphosphate + H2O = Fe(II)-heme o + diphosphate. It functions in the pathway porphyrin-containing compound metabolism; heme O biosynthesis; heme O from protoheme: step 1/1. Converts heme B (protoheme IX) to heme O by substitution of the vinyl group on carbon 2 of heme B porphyrin ring with a hydroxyethyl farnesyl side group. This is Protoheme IX farnesyltransferase from Burkholderia thailandensis (strain ATCC 700388 / DSM 13276 / CCUG 48851 / CIP 106301 / E264).